Here is a 369-residue protein sequence, read N- to C-terminus: Peptide chain release factor 2 (369 aa).

Q251 carries the post-translational modification N5-methylglutamine.

This sequence belongs to the prokaryotic/mitochondrial release factor family. Post-translationally, methylated by PrmC. Methylation increases the termination efficiency of RF2.

It localises to the cytoplasm. Peptide chain release factor 2 directs the termination of translation in response to the peptide chain termination codons UGA and UAA. The sequence is that of Peptide chain release factor 2 (prfB) from Chlamydia pneumoniae (Chlamydophila pneumoniae).